Reading from the N-terminus, the 42-residue chain is uncharacterized protein (42 aa).

This is an uncharacterized protein from Treponema pallidum (strain Nichols).